A 156-amino-acid polypeptide reads, in one-letter code: Cyanate hydratase (156 aa).

Catalysis depends on residues Arg96, Glu99, and Ser122.

Belongs to the cyanase family.

It carries out the reaction cyanate + hydrogencarbonate + 3 H(+) = NH4(+) + 2 CO2. In terms of biological role, catalyzes the reaction of cyanate with bicarbonate to produce ammonia and carbon dioxide. The sequence is that of Cyanate hydratase from Pseudomonas fluorescens (strain ATCC BAA-477 / NRRL B-23932 / Pf-5).